The sequence spans 314 residues: Lipoyl synthase (314 aa).

Residues C60, C65, C71, C86, C90, C93, and S300 each coordinate [4Fe-4S] cluster. The 218-residue stretch at 72–289 (FRKGTATFMI…RQFGLSIGFS (218 aa)) folds into the Radical SAM core domain.

Belongs to the radical SAM superfamily. Lipoyl synthase family. The cofactor is [4Fe-4S] cluster.

It localises to the cytoplasm. It catalyses the reaction [[Fe-S] cluster scaffold protein carrying a second [4Fe-4S](2+) cluster] + N(6)-octanoyl-L-lysyl-[protein] + 2 oxidized [2Fe-2S]-[ferredoxin] + 2 S-adenosyl-L-methionine + 4 H(+) = [[Fe-S] cluster scaffold protein] + N(6)-[(R)-dihydrolipoyl]-L-lysyl-[protein] + 4 Fe(3+) + 2 hydrogen sulfide + 2 5'-deoxyadenosine + 2 L-methionine + 2 reduced [2Fe-2S]-[ferredoxin]. It functions in the pathway protein modification; protein lipoylation via endogenous pathway; protein N(6)-(lipoyl)lysine from octanoyl-[acyl-carrier-protein]: step 2/2. Catalyzes the radical-mediated insertion of two sulfur atoms into the C-6 and C-8 positions of the octanoyl moiety bound to the lipoyl domains of lipoate-dependent enzymes, thereby converting the octanoylated domains into lipoylated derivatives. This chain is Lipoyl synthase, found in Pelobacter propionicus (strain DSM 2379 / NBRC 103807 / OttBd1).